The sequence spans 93 residues: Small ribosomal subunit protein uS17 (93 aa).

The protein belongs to the universal ribosomal protein uS17 family. Part of the 30S ribosomal subunit.

In terms of biological role, one of the primary rRNA binding proteins, it binds specifically to the 5'-end of 16S ribosomal RNA. This Rhodococcus erythropolis (strain PR4 / NBRC 100887) protein is Small ribosomal subunit protein uS17.